The primary structure comprises 1194 residues: Metabotropic glutamate receptor 1 (1194 aa).

An N-terminal signal peptide occupies residues 1-18 (MVGLLLFFFPAIFLEVSL). The Extracellular segment spans residues 19–592 (LPRSPGRKVL…VRYLEWSNIE (574 aa)). Cysteines 67 and 109 form a disulfide. An L-glutamate-binding site is contributed by Tyr74. Asn98 carries an N-linked (GlcNAc...) asparagine glycan. L-glutamate is bound by residues Ser165 and 186-188 (SAT). An N-linked (GlcNAc...) asparagine glycan is attached at Asn223. Tyr236 is an L-glutamate binding site. Cys289 and Cys291 are disulfide-bonded. L-glutamate is bound at residue Asp318. A disulfide bond links Cys378 and Cys394. N-linked (GlcNAc...) asparagine glycosylation occurs at Asn397. Residue Lys409 coordinates L-glutamate. Cys432 and Cys439 are oxidised to a cystine. An N-linked (GlcNAc...) asparagine glycan is attached at Asn515. The helical transmembrane segment at 593 to 615 (SIIAIAFSCLGILVTLFVTLIFV) threads the bilayer. The Cytoplasmic segment spans residues 616 to 629 (LYRDTPVVKSSSRE). Residues 630-650 (LCYIILAGIFLGYVCPFTLIA) form a helical membrane-spanning segment. Residues 651-658 (KPTTTSCY) are Extracellular-facing. Cys657 and Cys746 are disulfide-bonded. The chain crosses the membrane as a helical span at residues 659-680 (LQRLLVGLSSAMCYSALVTKTN). Over 681–703 (RIARILAGSKKKICTRKPRFMSA) the chain is Cytoplasmic. The chain crosses the membrane as a helical span at residues 704–727 (WAQVIIASILISVQLTLVVTLIIM). Residues 728-750 (EPPMPILSYPSIKEVYLICNTSN) lie on the Extracellular side of the membrane. A helical membrane pass occupies residues 751–772 (LGVVAPLGYNGLLIMSCTYYAF). Residues 773–785 (KTRNVPANFNEAK) are Cytoplasmic-facing. The chain crosses the membrane as a helical span at residues 786–807 (YIAFTMYTTCIIWLAFVPIYFG). Residues 808 to 815 (SNYKIITT) lie on the Extracellular side of the membrane. The chain crosses the membrane as a helical span at residues 816 to 840 (CFAVSLSVTVALGCMFTPKMYIIIA). Over 841 to 1194 (KPERNVRSAF…RDYKQSSSTL (354 aa)) the chain is Cytoplasmic. Position 853 is a phosphoserine (Ser853). Residue Thr871 is modified to Phosphothreonine. The disordered stretch occupies residues 883-905 (AGNANSNGKSVSWSEPGGGQVPK). The span at 885–895 (NANSNGKSVSW) shows a compositional bias: polar residues. Phosphoserine is present on residues Ser894 and Ser969. The disordered stretch occupies residues 1007-1030 (PALPKGLPPPLQQQQQPPPQQKSL). Over residues 1012–1026 (GLPPPLQQQQQPPPQ) the composition is skewed to pro residues. Ser1091 is subject to Phosphoserine. A disordered region spans residues 1113–1173 (HEREGNTEED…SPVSESVLCT (61 aa)). A compositionally biased stretch (acidic residues) spans 1119–1131 (TEEDELEEEEEDL). Phosphoserine is present on Ser1142. The residue at position 1146 (Thr1146) is a Phosphothreonine. Ser1149 carries the post-translational modification Phosphoserine. Positions 1154–1170 (SVASGSSVPSSPVSESV) are enriched in low complexity.

Belongs to the G-protein coupled receptor 3 family. As to quaternary structure, homodimer; disulfide-linked. The PPXXF motif binds HOMER1, HOMER2 and HOMER3. Interacts with TAMALIN. Interacts with RYR1, RYR2, ITPR1, SHANK1 and SHANK3. Interacts with SIAH1. In terms of tissue distribution, detected in brain.

It is found in the cell membrane. The protein localises to the postsynaptic cell membrane. Its subcellular location is the cell projection. The protein resides in the dendrite. With respect to regulation, signaling is inhibited by the antagonist LY341495. The LY341495 binding site partially overlaps with the glutamate binding site. Signaling is also inhibited by synthetic allosteric regulators, such as FITM (4-fluoro-N-(4-(6-(isopropylamino)pyrimidin-4-yl)thiazol-2-yl)-N-methylbenzamide) that bind in a pocket between the transmembrane helices. In terms of biological role, G-protein coupled receptor for glutamate. Ligand binding causes a conformation change that triggers signaling via guanine nucleotide-binding proteins (G proteins) and modulates the activity of down-stream effectors. Signaling activates a phosphatidylinositol-calcium second messenger system. May participate in the central action of glutamate in the CNS, such as long-term potentiation in the hippocampus and long-term depression in the cerebellum. May function in the light response in the retina. Induces GRID1 and GRID2 cation-channel activation via GNAQ-PLC-PKC pathway in dopaminergic neurons and cerebellar Purkinje cell, respectively. The protein is Metabotropic glutamate receptor 1 (GRM1) of Homo sapiens (Human).